A 226-amino-acid polypeptide reads, in one-letter code: Protein transport protein sec20 (226 aa).

Residues 1 to 189 are Cytoplasmic-facing; it reads MADVLNALEE…IKSLKLSDRS (189 aa). The stretch at 53–75 forms a coiled coil; it reads LRYEKAVQEYIRLNRRYRNKIAS. S97 is modified (phosphoserine). A helical; Anchor for type IV membrane protein membrane pass occupies residues 190 to 210; the sequence is DYFLVVSGFGFFIFVVVYLLF. The Lumenal segment spans residues 211–226; the sequence is KRIVWPILSMFLWFLR.

It belongs to the SEC20 family. As to quaternary structure, component of a SNARE complex consisting of ufe1, sec20, sec22 and use1. Interacts with tip20 through its cytoplasmic domain.

Its subcellular location is the endoplasmic reticulum membrane. SNARE required for targeting and fusion of Golgi-derived retrograde transport vesicles with the ER. The protein is Protein transport protein sec20 of Schizosaccharomyces pombe (strain 972 / ATCC 24843) (Fission yeast).